The following is a 305-amino-acid chain: HPr kinase/phosphorylase (305 aa).

Active-site residues include H136 and K157. Residue 151–158 (GESGIGKS) coordinates ATP. S158 provides a ligand contact to Mg(2+). D175 serves as the catalytic Proton acceptor; for phosphorylation activity. Proton donor; for dephosphorylation activity. The tract at residues 198-207 (LEVRGLGIID) is important for the catalytic mechanism of both phosphorylation and dephosphorylation. Mg(2+) is bound at residue E199. R240 is a catalytic residue. The important for the catalytic mechanism of dephosphorylation stretch occupies residues 261–266 (PIRPGR).

This sequence belongs to the HPrK/P family. Homohexamer. Mg(2+) is required as a cofactor.

It carries out the reaction [HPr protein]-L-serine + ATP = [HPr protein]-O-phospho-L-serine + ADP + H(+). It catalyses the reaction [HPr protein]-O-phospho-L-serine + phosphate + H(+) = [HPr protein]-L-serine + diphosphate. Functionally, catalyzes the ATP- as well as the pyrophosphate-dependent phosphorylation of a specific serine residue in HPr, a phosphocarrier protein of the phosphoenolpyruvate-dependent sugar phosphotransferase system (PTS). HprK/P also catalyzes the pyrophosphate-producing, inorganic phosphate-dependent dephosphorylation (phosphorolysis) of seryl-phosphorylated HPr (P-Ser-HPr). The two antagonistic activities of HprK/P are regulated by several intracellular metabolites, which change their concentration in response to the absence or presence of rapidly metabolisable carbon sources (glucose, fructose, etc.) in the growth medium. Therefore, by controlling the phosphorylation state of HPr, HPrK/P is a sensor enzyme that plays a major role in the regulation of carbon metabolism and sugar transport: it mediates carbon catabolite repression (CCR), and regulates PTS-catalyzed carbohydrate uptake and inducer exclusion. This chain is HPr kinase/phosphorylase, found in Clostridium tetani (strain Massachusetts / E88).